The primary structure comprises 267 residues: Thiazole synthase (267 aa).

Lys101 functions as the Schiff-base intermediate with DXP in the catalytic mechanism. 1-deoxy-D-xylulose 5-phosphate-binding positions include Gly162, 188–189 (AG), and 210–211 (NT). The tract at residues 247-267 (HASPSSPAAGVPCLPDPEVPV) is disordered.

The protein belongs to the ThiG family. Homotetramer. Forms heterodimers with either ThiH or ThiS.

The protein resides in the cytoplasm. It catalyses the reaction [ThiS sulfur-carrier protein]-C-terminal-Gly-aminoethanethioate + 2-iminoacetate + 1-deoxy-D-xylulose 5-phosphate = [ThiS sulfur-carrier protein]-C-terminal Gly-Gly + 2-[(2R,5Z)-2-carboxy-4-methylthiazol-5(2H)-ylidene]ethyl phosphate + 2 H2O + H(+). The protein operates within cofactor biosynthesis; thiamine diphosphate biosynthesis. In terms of biological role, catalyzes the rearrangement of 1-deoxy-D-xylulose 5-phosphate (DXP) to produce the thiazole phosphate moiety of thiamine. Sulfur is provided by the thiocarboxylate moiety of the carrier protein ThiS. In vitro, sulfur can be provided by H(2)S. This is Thiazole synthase from Deinococcus geothermalis (strain DSM 11300 / CIP 105573 / AG-3a).